The following is a 151-amino-acid chain: Small ribosomal subunit protein uS15 (151 aa).

It belongs to the universal ribosomal protein uS15 family.

The polypeptide is Small ribosomal subunit protein uS15 (RpS13) (Plutella xylostella (Diamondback moth)).